Reading from the N-terminus, the 431-residue chain is Argininosuccinate lyase (431 aa).

It belongs to the lyase 1 family. Argininosuccinate lyase subfamily.

The protein resides in the cytoplasm. The catalysed reaction is 2-(N(omega)-L-arginino)succinate = fumarate + L-arginine. It participates in amino-acid biosynthesis; L-arginine biosynthesis; L-arginine from L-ornithine and carbamoyl phosphate: step 3/3. This is Argininosuccinate lyase from Xanthomonas oryzae pv. oryzae (strain MAFF 311018).